Consider the following 103-residue polypeptide: Small ribosomal subunit protein uS10 (103 aa).

The protein belongs to the universal ribosomal protein uS10 family. As to quaternary structure, part of the 30S ribosomal subunit.

Functionally, involved in the binding of tRNA to the ribosomes. The sequence is that of Small ribosomal subunit protein uS10 from Rubrobacter xylanophilus (strain DSM 9941 / JCM 11954 / NBRC 16129 / PRD-1).